A 158-amino-acid polypeptide reads, in one-letter code: Transcription elongation factor GreA (158 aa).

Belongs to the GreA/GreB family.

In terms of biological role, necessary for efficient RNA polymerase transcription elongation past template-encoded arresting sites. The arresting sites in DNA have the property of trapping a certain fraction of elongating RNA polymerases that pass through, resulting in locked ternary complexes. Cleavage of the nascent transcript by cleavage factors such as GreA or GreB allows the resumption of elongation from the new 3'terminus. GreA releases sequences of 2 to 3 nucleotides. The sequence is that of Transcription elongation factor GreA from Verminephrobacter eiseniae (strain EF01-2).